Here is a 184-residue protein sequence, read N- to C-terminus: MANKALILLAVLFCAQAVLGVTIISKSEWGGRSATSKTSLANYLSYAVIHHTAGNYCSTKAACITQLQNIQAYHMDSLGWADIGYNFLIGGDGNVYEGRGWNVMGAHATNWNSKSIGISFLGNYNTNTLTSAQITAAKGLLSDAVSRGQIVSGYILYGHRQVGSTECPGTNIWNEIRTWSNWKA.

The N-terminal stretch at 1–20 (MANKALILLAVLFCAQAVLG) is a signal peptide. Residues 45-169 (SYAVIHHTAG…RQVGSTECPG (125 aa)) form the N-acetylmuramoyl-L-alanine amidase domain. H50 contributes to the Zn(2+) binding site. An intrachain disulfide couples C57 to C63. Residues H159 and C167 each coordinate Zn(2+).

The protein belongs to the N-acetylmuramoyl-L-alanine amidase 2 family. It depends on Zn(2+) as a cofactor. As to expression, constitutively expressed at high level in gut, in addition to the induced expression in fat body.

Its subcellular location is the secreted. It catalyses the reaction Hydrolyzes the link between N-acetylmuramoyl residues and L-amino acid residues in certain cell-wall glycopeptides.. N-acetylmuramyl-L-alanine amidase involved in innate immunity by degrading bacterial peptidoglycans (PGN). Probably plays a scavenger role by digesting biologically active PGN into biologically inactive fragments. Has no direct bacteriolytic activity. The chain is Peptidoglycan-recognition protein SC2 (PGRP-SC2) from Drosophila melanogaster (Fruit fly).